The chain runs to 256 residues: Adenylate kinase (256 aa).

Position 49-54 (49-54 (GAGKGT)) interacts with ATP. The NMP stretch occupies residues 69 to 98 (ATGDMLREQVQQKTPLGIEAKKIMDAGGLV). AMP is bound by residues Thr-70, Arg-75, 96–98 (GLV), 125–128 (GFPR), and Gln-132. The interval 166-203 (GRLVHPASGRSYHKEFNPPKKRNVDDVTGEPLIQRSDD) is LID. ATP is bound by residues Arg-167 and 176 to 177 (SY). AMP is bound by residues Arg-200 and Arg-211. ATP is bound at residue Gln-239.

It belongs to the adenylate kinase family. AK2 subfamily. In terms of assembly, monomer.

The protein localises to the cytoplasm. It is found in the cytosol. The protein resides in the mitochondrion intermembrane space. The catalysed reaction is AMP + ATP = 2 ADP. In terms of biological role, catalyzes the reversible transfer of the terminal phosphate group between ATP and AMP. Plays an important role in cellular energy homeostasis and in adenine nucleotide metabolism. Adenylate kinase activity is critical for regulation of the phosphate utilization and the AMP de novo biosynthesis pathways. The protein is Adenylate kinase of Laccaria bicolor (strain S238N-H82 / ATCC MYA-4686) (Bicoloured deceiver).